Reading from the N-terminus, the 319-residue chain is Acetyl-coenzyme A carboxylase carboxyl transferase subunit alpha (319 aa).

A CoA carboxyltransferase C-terminal domain is found at 38–293 (HALQDKLRMR…KAVLLNELDA (256 aa)).

This sequence belongs to the AccA family. Acetyl-CoA carboxylase is a heterohexamer composed of biotin carboxyl carrier protein (AccB), biotin carboxylase (AccC) and two subunits each of ACCase subunit alpha (AccA) and ACCase subunit beta (AccD).

Its subcellular location is the cytoplasm. The catalysed reaction is N(6)-carboxybiotinyl-L-lysyl-[protein] + acetyl-CoA = N(6)-biotinyl-L-lysyl-[protein] + malonyl-CoA. The protein operates within lipid metabolism; malonyl-CoA biosynthesis; malonyl-CoA from acetyl-CoA: step 1/1. Component of the acetyl coenzyme A carboxylase (ACC) complex. First, biotin carboxylase catalyzes the carboxylation of biotin on its carrier protein (BCCP) and then the CO(2) group is transferred by the carboxyltransferase to acetyl-CoA to form malonyl-CoA. The protein is Acetyl-coenzyme A carboxylase carboxyl transferase subunit alpha of Stenotrophomonas maltophilia (strain K279a).